Here is a 435-residue protein sequence, read N- to C-terminus: Methylenetetrahydrofolate--tRNA-(uracil-5-)-methyltransferase TrmFO (435 aa).

9–14 contacts FAD; that stretch reads GAGLAG.

The protein belongs to the MnmG family. TrmFO subfamily. FAD is required as a cofactor.

Its subcellular location is the cytoplasm. The enzyme catalyses uridine(54) in tRNA + (6R)-5,10-methylene-5,6,7,8-tetrahydrofolate + NADH + H(+) = 5-methyluridine(54) in tRNA + (6S)-5,6,7,8-tetrahydrofolate + NAD(+). The catalysed reaction is uridine(54) in tRNA + (6R)-5,10-methylene-5,6,7,8-tetrahydrofolate + NADPH + H(+) = 5-methyluridine(54) in tRNA + (6S)-5,6,7,8-tetrahydrofolate + NADP(+). In terms of biological role, catalyzes the folate-dependent formation of 5-methyl-uridine at position 54 (M-5-U54) in all tRNAs. This is Methylenetetrahydrofolate--tRNA-(uracil-5-)-methyltransferase TrmFO from Staphylococcus aureus (strain Newman).